A 454-amino-acid polypeptide reads, in one-letter code: Inner membrane transport protein YajR (454 aa).

Over 1–14 the chain is Periplasmic; the sequence is MNDYKMTPGERRAT. Residues 15-35 traverse the membrane as a helical segment; the sequence is WGLGTVFSLRMLGMFMVLPVL. At 36–47 the chain is on the cytoplasmic side; sequence TTYGMALQGASE. A helical membrane pass occupies residues 48-68; it reads ALIGIAIGIYGLTQAVFQIPF. Topologically, residues 69-84 are periplasmic; sequence GLLSDRIGRKPLIVGG. A helical transmembrane segment spans residues 85-105; sequence LAVFAAGSVIAALSDSIWGII. Residues 106 to 137 are Cytoplasmic-facing; it reads LGRALQGSGAIAAAVMALLSDLTREQNRTKAM. A helical membrane pass occupies residues 138-158; the sequence is AFIGVSFGITFAIAMVLGPII. Residues 159–165 are Periplasmic-facing; the sequence is THKLGLH. Residues 166–186 traverse the membrane as a helical segment; that stretch reads ALFWMIAILATTGIALTIWVV. Over 187-216 the chain is Cytoplasmic; sequence PNSSTHVLNRESGMVKGSFSKVLAEPRLLK. Residues 217 to 237 form a helical membrane-spanning segment; that stretch reads LNFGIMCLHILLMSTFVALPG. At 238–252 the chain is on the periplasmic side; the sequence is QLADAGFPAAEHWKV. A helical membrane pass occupies residues 253-273; sequence YLATMLIAFGSVVPFIIYAEV. Residues 274 to 279 are Cytoplasmic-facing; sequence KRKMKQ. A helical transmembrane segment spans residues 280–300; it reads VFVFCVGLIVVAEIVLWNAQT. Residues 301-306 are Periplasmic-facing; that stretch reads QFWQLV. Residues 307 to 327 traverse the membrane as a helical segment; the sequence is VGVQLFFVAFNLMEALLPSLI. Topologically, residues 328 to 340 are cytoplasmic; the sequence is SKESPAGYKGTAM. Residues 341–361 traverse the membrane as a helical segment; the sequence is GVYSTSQFLGVAIGGSLGGWI. Over 362-363 the chain is Periplasmic; the sequence is NG. A helical transmembrane segment spans residues 364 to 384; that stretch reads MFDGQGVFLAGAMLAAVWLTV. The Cytoplasmic portion of the chain corresponds to 385-454; that stretch reads ASTMKEPPYV…FEIEQAIRQA (70 aa).

Belongs to the major facilitator superfamily.

The protein resides in the cell inner membrane. The polypeptide is Inner membrane transport protein YajR (yajR) (Escherichia coli (strain K12)).